A 456-amino-acid polypeptide reads, in one-letter code: tRNA modification GTPase MnmE (456 aa).

(6S)-5-formyl-5,6,7,8-tetrahydrofolate is bound by residues arginine 25, glutamate 82, and lysine 121. A TrmE-type G domain is found at 217–379 (GIKVVIIGKP…LLDEIVKIAG (163 aa)). Asparagine 227 contributes to the K(+) binding site. GTP contacts are provided by residues 227-232 (NAGKSS), 246-252 (TDIAGTT), and 271-274 (DTAG). Serine 231 lines the Mg(2+) pocket. The K(+) site is built by threonine 246, isoleucine 248, and threonine 251. Threonine 252 is a Mg(2+) binding site. A (6S)-5-formyl-5,6,7,8-tetrahydrofolate-binding site is contributed by lysine 456.

It belongs to the TRAFAC class TrmE-Era-EngA-EngB-Septin-like GTPase superfamily. TrmE GTPase family. As to quaternary structure, homodimer. Heterotetramer of two MnmE and two MnmG subunits. K(+) is required as a cofactor.

It is found in the cytoplasm. In terms of biological role, exhibits a very high intrinsic GTPase hydrolysis rate. Involved in the addition of a carboxymethylaminomethyl (cmnm) group at the wobble position (U34) of certain tRNAs, forming tRNA-cmnm(5)s(2)U34. The polypeptide is tRNA modification GTPase MnmE (Endomicrobium trichonymphae).